We begin with the raw amino-acid sequence, 179 residues long: O-acetyl-ADP-ribose deacetylase (179 aa).

The Macro domain occupies 1–175 (MTSRLQVIQG…LYARLLTQQG (175 aa)). Substrate is bound by residues 11–12 (DI), Asn-25, 33–35 (GVD), and 122–126 (STGVY). The active-site Proton acceptor is Asp-35.

It belongs to the MacroD-type family. YmdB subfamily. As to quaternary structure, homodimer. Interacts with RNase III.

The catalysed reaction is 3''-O-acetyl-ADP-D-ribose + H2O = ADP-D-ribose + acetate + H(+). It catalyses the reaction 2''-O-acetyl-ADP-D-ribose + H2O = ADP-D-ribose + acetate + H(+). Functionally, deacetylates O-acetyl-ADP ribose to yield ADP-ribose and free acetate. Down-regulates ribonuclease 3 (RNase III) activity. Acts by interacting directly with the region of the ribonuclease that is required for dimerization/activation. This chain is O-acetyl-ADP-ribose deacetylase, found in Salmonella typhi.